A 333-amino-acid polypeptide reads, in one-letter code: DNA-directed RNA polymerase subunit alpha (333 aa).

The alpha N-terminal domain (alpha-NTD) stretch occupies residues 1-235; that stretch reads MQTNLLKPKA…EQLAVFAQLE (235 aa). The interval 253 to 333 is alpha C-terminal domain (alpha-CTD); it reads FDPILLRPVD…NWPPQGLDKR (81 aa).

The protein belongs to the RNA polymerase alpha chain family. As to quaternary structure, homodimer. The RNAP catalytic core consists of 2 alpha, 1 beta, 1 beta' and 1 omega subunit. When a sigma factor is associated with the core the holoenzyme is formed, which can initiate transcription.

It catalyses the reaction RNA(n) + a ribonucleoside 5'-triphosphate = RNA(n+1) + diphosphate. Functionally, DNA-dependent RNA polymerase catalyzes the transcription of DNA into RNA using the four ribonucleoside triphosphates as substrates. The chain is DNA-directed RNA polymerase subunit alpha from Methylibium petroleiphilum (strain ATCC BAA-1232 / LMG 22953 / PM1).